A 590-amino-acid polypeptide reads, in one-letter code: Methionine--tRNA ligase, mitochondrial (590 aa).

The transit peptide at 1–26 (MRTRFLFLTSGCKAVPELHKIVLANA) directs the protein to the mitochondrion. The short motif at 51–61 (FYVNASPHLGH) is the 'HIGH' region element. The 'KMSKS' region motif lies at 342-346 (KMSKS). ATP is bound at residue lysine 345. The disordered stretch occupies residues 570 to 590 (LESQRADQQKNRKMEKGSNLK). A compositionally biased stretch (basic and acidic residues) spans 571-590 (ESQRADQQKNRKMEKGSNLK).

It belongs to the class-I aminoacyl-tRNA synthetase family.

It is found in the mitochondrion matrix. The catalysed reaction is tRNA(Met) + L-methionine + ATP = L-methionyl-tRNA(Met) + AMP + diphosphate. This Takifugu rubripes (Japanese pufferfish) protein is Methionine--tRNA ligase, mitochondrial (mars2).